Here is a 246-residue protein sequence, read N- to C-terminus: 33kDa venom protein (246 aa).

The N-terminal stretch at 1-20 is a signal peptide; the sequence is MAGKEVIFIMALFIAVESSP. 7 consecutive repeat copies span residues 83–96, 97–110, 111–124, 125–138, 139–152, 153–166, and 167–180. The interval 83–243 is 12 X approximate tandem repeats of [AV][DE]X[VL]SGSX[DE]QX[KR]X[ST]; the sequence is GGAVSESVKQ…SGSVGNDDDI (161 aa). A disordered region spans residues 88–246; sequence ESVKQKRETA…VGNDDDISVQ (159 aa). A compositionally biased stretch (polar residues) spans 112-123; it reads ENLSGSFDQQKS. Residues 175–186 show a composition bias toward basic and acidic residues; that stretch reads DKQKVTVEEKSE. The stretch at 181 to 187 is one 8; half-length repeat; the sequence is VEEKSEP. Repeat copies occupy residues 188-201, 202-215, 216-229, and 230-243. The segment covering 217–228 has biased composition (polar residues); that stretch reads ESLSGSFDQQKS.

In terms of tissue distribution, expressed by the venom gland.

It localises to the secreted. The sequence is that of 33kDa venom protein from Chelonus sp. nr. curvimaculatus (Parasitic wasp).